Reading from the N-terminus, the 309-residue chain is Fructosamine-3-kinase (309 aa).

N-acetylmethionine is present on Met-1. 89–91 (EHL) is an ATP binding site. The active-site Proton acceptor is Asp-217.

This sequence belongs to the fructosamine kinase family. As to quaternary structure, monomer. As to expression, expressed in red blood cells, brain, heart, kidney and muscle. Lower expression is observed in liver. Not expressed in lung, spleen, testis and thymus.

The enzyme catalyses N(6)-(D-fructosyl)-L-lysyl-[protein] + ATP = N(6)-(3-O-phospho-D-fructosyl)-L-lysyl-[protein] + ADP + H(+). It catalyses the reaction N(6)-D-ribulosyl-L-lysyl-[protein] + ATP = N(6)-(3-O-phospho-D-ribulosyl)-L-lysyl-[protein] + ADP + H(+). The catalysed reaction is N(6)-(D-psicosyl)-L-lysyl-[protein] + ATP = N(6)-(3-O-phospho-D-psicosyl)-L-lysyl-[protein] + ADP + H(+). Fructosamine-3-kinase involved in protein deglycation by mediating phosphorylation of fructoselysine residues on glycated proteins, to generate fructoselysine-3 phosphate. Fructoselysine-3 phosphate adducts are unstable and decompose under physiological conditions. Involved in intracellular deglycation in erythrocytes and pancreatic islets. Involved in the response to oxidative stress by mediating deglycation of NFE2L2/NRF2, glycation impairing NFE2L2/NRF2 function. Also able to phosphorylate psicosamines and ribulosamines. This is Fructosamine-3-kinase from Mus musculus (Mouse).